Here is a 360-residue protein sequence, read N- to C-terminus: Peptide chain release factor 1 (360 aa).

Glutamine 235 is subject to N5-methylglutamine. The disordered stretch occupies residues 285 to 313 (KRQQAEASTRRNLLGSGDRSDRNRTYNFP).

The protein belongs to the prokaryotic/mitochondrial release factor family. In terms of processing, methylated by PrmC. Methylation increases the termination efficiency of RF1.

The protein resides in the cytoplasm. Its function is as follows. Peptide chain release factor 1 directs the termination of translation in response to the peptide chain termination codons UAG and UAA. This chain is Peptide chain release factor 1, found in Salmonella paratyphi A (strain ATCC 9150 / SARB42).